The sequence spans 703 residues: Histone-lysine N-methyltransferase SETDB2 (703 aa).

The 71-residue stretch at 178-248 (FTKGNPLQLP…DNFSFNNHVR (71 aa)) folds into the MBD domain. One can recognise a Pre-SET domain in the interval 310–384 (KCCNCTDGCL…LCQNRVVQHG (75 aa)). Residues Cys312, Cys314, Cys318, Cys324, Cys326, Cys365, Cys369, Cys371, and Cys376 each coordinate Zn(2+). One can recognise an SET domain in the interval 387-678 (LRLQVFKTNT…AGTELTWDYS (292 aa)). An S-adenosyl-L-methionine-binding site is contributed by 397-399 (KGW). Residues 492-588 (TFSPRQARSG…SSSVISGGHP (97 aa)) form a disordered region. Positions 511–525 (RRPKTKTSMLQKRRR) are enriched in basic residues. Residues 550–560 (PEQKSSAGTKI) are compositionally biased toward polar residues. Residues 571-586 (SGYVSEESSSSVISGG) show a composition bias toward low complexity. S-adenosyl-L-methionine contacts are provided by residues Arg632 and 635-636 (NH). 4 residues coordinate Zn(2+): Cys638, Cys691, Cys693, and Cys698.

Belongs to the class V-like SAM-binding methyltransferase superfamily.

It localises to the nucleus. Its subcellular location is the chromosome. The enzyme catalyses N(6),N(6)-dimethyl-L-lysyl(9)-[histone H3] + S-adenosyl-L-methionine = N(6),N(6),N(6)-trimethyl-L-lysyl(9)-[histone H3] + S-adenosyl-L-homocysteine + H(+). Histone methyltransferase involved in left-right axis specification in early development and mitosis. Specifically trimethylates 'Lys-9' of histone H3 (H3K9me3). H3K9me3 is a specific tag for epigenetic transcriptional repression that recruits HP1 (CBX1, CBX3 and/or CBX5) proteins to methylated histones. Contributes to H3K9me3 in both the interspersed repetitive elements and centromere-associated repeats. Plays a role in chromosome condensation and segregation during mitosis. The protein is Histone-lysine N-methyltransferase SETDB2 (setdb2) of Xenopus laevis (African clawed frog).